Here is a 367-residue protein sequence, read N- to C-terminus: UDP-N-acetylenolpyruvoylglucosamine reductase 2 (367 aa).

The FAD-binding PCMH-type domain maps to 31-198 (IGGKPRSAVR…LAIELQLLTD (168 aa)). Residue arginine 176 is part of the active site. Residue serine 256 is the Proton donor of the active site. Residue glutamate 357 is part of the active site.

This sequence belongs to the MurB family. FAD serves as cofactor.

Its subcellular location is the cytoplasm. The catalysed reaction is UDP-N-acetyl-alpha-D-muramate + NADP(+) = UDP-N-acetyl-3-O-(1-carboxyvinyl)-alpha-D-glucosamine + NADPH + H(+). It participates in cell wall biogenesis; peptidoglycan biosynthesis. Functionally, cell wall formation. In Corynebacterium glutamicum (strain ATCC 13032 / DSM 20300 / JCM 1318 / BCRC 11384 / CCUG 27702 / LMG 3730 / NBRC 12168 / NCIMB 10025 / NRRL B-2784 / 534), this protein is UDP-N-acetylenolpyruvoylglucosamine reductase 2 (murB2).